A 104-amino-acid chain; its full sequence is Ubiquitin-related modifier 1 homolog (104 aa).

Position 104 is a 1-thioglycine (Gly-104). Gly-104 participates in a covalent cross-link: Glycyl lysine isopeptide (Gly-Lys) (interchain with K-? in acceptor proteins).

This sequence belongs to the URM1 family. As to quaternary structure, interacts with cer. In terms of processing, C-terminal thiocarboxylation occurs in 2 steps, it is first acyl-adenylated (-COAMP) via the hesA/moeB/thiF part of the MOCS3 homolog, then thiocarboxylated (-COSH) via the rhodanese domain of the MOCS3 homolog.

The protein localises to the cytoplasm. It participates in tRNA modification; 5-methoxycarbonylmethyl-2-thiouridine-tRNA biosynthesis. Its function is as follows. Acts as a sulfur carrier required for 2-thiolation of mcm(5)S(2)U at tRNA wobble positions of cytosolic tRNA(Lys), tRNA(Glu) and tRNA(Gln). Serves as sulfur donor in tRNA 2-thiolation reaction by being thiocarboxylated (-COSH) at its C-terminus by MOCS3. The sulfur is then transferred to tRNA to form 2-thiolation of mcm(5)S(2)U. Also acts as a ubiquitin-like protein (UBL) that is covalently conjugated via an isopeptide bond to lysine residues of target proteins such as Prx2/Jafrac1, Ciao1, Eip71CD and GILT1. The thiocarboxylated form serves as substrate for conjugation and oxidative stress specifically induces the formation of UBL-protein conjugates. The sequence is that of Ubiquitin-related modifier 1 homolog from Drosophila grimshawi (Hawaiian fruit fly).